Here is a 64-residue protein sequence, read N- to C-terminus: Small ribosomal subunit protein bS21 (64 aa).

This sequence belongs to the bacterial ribosomal protein bS21 family.

The sequence is that of Small ribosomal subunit protein bS21 from Neorickettsia sennetsu (strain ATCC VR-367 / Miyayama) (Ehrlichia sennetsu).